Here is a 307-residue protein sequence, read N- to C-terminus: Probable E3 SUMO-protein ligase RNF212 (307 aa).

The segment at 7-46 adopts an RING-type zinc-finger fold; it reads CNRCFQSPHRKSSFSLTSCGHVYCHSCLLKGTKNECVICQ. The stretch at 91 to 124 forms a coiled coil; the sequence is RRRLVAFYQEKISQLEESLRKSVLQIKQLQSMRS. The tract at residues 164–291 is disordered; that stretch reads LTPPARKPEM…KMSPFLPSTP (128 aa). Polar residues-rich tracts occupy residues 202-213, 233-252, and 259-271; these read LSLTPSHASMTK, SQLS…SSWT, and ISIS…QCAG.

In terms of tissue distribution, specifically expressed in meiocytes of the gonads.

It localises to the nucleus. It is found in the chromosome. It functions in the pathway protein modification; protein sumoylation. Functionally, SUMO E3 ligase that acts as a regulator of crossing-over during meiosis: required to couple chromosome synapsis to the formation of crossover-specific recombination complexes. Localizes to recombination sites and stabilizes meiosis-specific recombination factors, such as MutS-gamma complex proteins (MSH4 and MSH5) and TEX11. May mediate sumoylation of target proteins MSH4 and/or MSH5, leading to enhance their binding to recombination sites. Acts as a limiting factor for crossover designation and/or reinforcement and plays an antagonist role with CCNB1IP1/HEI10 in the regulation of meiotic recombination. In Mus musculus (Mouse), this protein is Probable E3 SUMO-protein ligase RNF212 (Rnf212).